The primary structure comprises 673 residues: Capsid protein (673 aa).

A disordered region spans residues 575–595 (NLPTDSSLESDSDSEPAPKKK).

The protein belongs to the anelloviridae capsid protein family.

The protein localises to the virion. In terms of biological role, self-assembles to form an icosahedral capsid with a T=1 symmetry, about 30 nm in diameter, and consisting of 60 capsid proteins. The capsid encapsulates the genomic DNA. Capsid protein is involved in attachment and entry into the host cell. The protein is Capsid protein of Homo sapiens (Human).